The chain runs to 61 residues: Photosystem II reaction center protein K (61 aa).

Positions 1 to 24 are excised as a propeptide; it reads MLNIFNLICICFNSALFSSSFLFA. A helical transmembrane segment spans residues 36-56; sequence IVDFMPVIPVLFFLLAFVWQA.

This sequence belongs to the PsbK family. PSII is composed of 1 copy each of membrane proteins PsbA, PsbB, PsbC, PsbD, PsbE, PsbF, PsbH, PsbI, PsbJ, PsbK, PsbL, PsbM, PsbT, PsbX, PsbY, PsbZ, Psb30/Ycf12, at least 3 peripheral proteins of the oxygen-evolving complex and a large number of cofactors. It forms dimeric complexes.

It is found in the plastid. Its subcellular location is the chloroplast thylakoid membrane. Its function is as follows. One of the components of the core complex of photosystem II (PSII). PSII is a light-driven water:plastoquinone oxidoreductase that uses light energy to abstract electrons from H(2)O, generating O(2) and a proton gradient subsequently used for ATP formation. It consists of a core antenna complex that captures photons, and an electron transfer chain that converts photonic excitation into a charge separation. The chain is Photosystem II reaction center protein K from Gossypium barbadense (Sea Island cotton).